A 188-amino-acid polypeptide reads, in one-letter code: NAD(P)H-quinone oxidoreductase subunit J (188 aa).

This sequence belongs to the complex I 30 kDa subunit family. NDH-1 can be composed of about 15 different subunits; different subcomplexes with different compositions have been identified which probably have different functions.

The protein localises to the cellular thylakoid membrane. It carries out the reaction a plastoquinone + NADH + (n+1) H(+)(in) = a plastoquinol + NAD(+) + n H(+)(out). It catalyses the reaction a plastoquinone + NADPH + (n+1) H(+)(in) = a plastoquinol + NADP(+) + n H(+)(out). Its function is as follows. NDH-1 shuttles electrons from an unknown electron donor, via FMN and iron-sulfur (Fe-S) centers, to quinones in the respiratory and/or the photosynthetic chain. The immediate electron acceptor for the enzyme in this species is believed to be plastoquinone. Couples the redox reaction to proton translocation, and thus conserves the redox energy in a proton gradient. Cyanobacterial NDH-1 also plays a role in inorganic carbon-concentration. The chain is NAD(P)H-quinone oxidoreductase subunit J from Parasynechococcus marenigrum (strain WH8102).